The following is a 531-amino-acid chain: 2,3-bisphosphoglycerate-independent phosphoglycerate mutase (531 aa).

2 residues coordinate Mn(2+): D13 and S63. The active-site Phosphoserine intermediate is S63. Residues H124, 154–155 (RD), R187, R193, 261–264 (RPDR), and K342 contribute to the substrate site. D420, H424, D462, H463, and H480 together coordinate Mn(2+).

The protein belongs to the BPG-independent phosphoglycerate mutase family. As to quaternary structure, monomer. Requires Mn(2+) as cofactor.

The enzyme catalyses (2R)-2-phosphoglycerate = (2R)-3-phosphoglycerate. The protein operates within carbohydrate degradation; glycolysis; pyruvate from D-glyceraldehyde 3-phosphate: step 3/5. Its function is as follows. Catalyzes the interconversion of 2-phosphoglycerate and 3-phosphoglycerate. The sequence is that of 2,3-bisphosphoglycerate-independent phosphoglycerate mutase from Mycoplasma capricolum subsp. capricolum (strain California kid / ATCC 27343 / NCTC 10154).